A 199-amino-acid polypeptide reads, in one-letter code: Protein GrpE (199 aa).

A compositionally biased stretch (polar residues) spans 1–17 (MSDSDNNTKSQQNNPTQ). Residues 1–36 (MSDSDNNTKSQQNNPTQTDEKSGEEIQSNQKPQRKF) form a disordered region.

It belongs to the GrpE family. In terms of assembly, homodimer.

It is found in the cytoplasm. Functionally, participates actively in the response to hyperosmotic and heat shock by preventing the aggregation of stress-denatured proteins, in association with DnaK and GrpE. It is the nucleotide exchange factor for DnaK and may function as a thermosensor. Unfolded proteins bind initially to DnaJ; upon interaction with the DnaJ-bound protein, DnaK hydrolyzes its bound ATP, resulting in the formation of a stable complex. GrpE releases ADP from DnaK; ATP binding to DnaK triggers the release of the substrate protein, thus completing the reaction cycle. Several rounds of ATP-dependent interactions between DnaJ, DnaK and GrpE are required for fully efficient folding. This chain is Protein GrpE, found in Ehrlichia canis (strain Jake).